Here is a 327-residue protein sequence, read N- to C-terminus: Serine/threonine-protein phosphatase PP1-beta catalytic subunit (327 aa).

Residue Ala-2 is modified to N-acetylalanine. Mn(2+) is bound by residues Asp-63, His-65, Asp-91, and Asn-123. The Proton donor role is filled by His-124. Positions 172 and 247 each coordinate Mn(2+). The disordered stretch occupies residues 305–327; sequence QYGGLNSGRPVTPPRTANPPKKR. Residue Thr-316 is modified to Phosphothreonine.

Belongs to the PPP phosphatase family. PP-1 subfamily. As to quaternary structure, PP1 comprises a catalytic subunit, PPP1CA, PPP1CB or PPP1CC, which is folded into its native form by inhibitor 2 and glycogen synthetase kinase 3, and then complexed to one or several targeting or regulatory subunits. The targeting or regulatory subunits determine the substrate specificity of PP1. PPP1R12A, PPP1R12B and PPP1R12C mediate binding to myosin. PPP1R3A (in skeletal muscle), PPP1R3B (in liver), PPP1R3C, PPP1R3D and PPP1R3F (in brain) mediate binding to glycogen. PPP1R15A and PPP1R15B mediate binding to EIF2S1. Part of a complex containing PPP1R15B, PP1 and NCK1/2. Interacts with PPP1R7 and PPP1R12C. Interacts with PPP1R16B. Component of the PTW/PP1 phosphatase complex, composed of PPP1R10/PNUTS, TOX4, WDR82, and PPP1CA or PPP1CB or PPP1CC. Interacts with PPP1R8. Interacts with PPP1R12A and NUAK1; the interaction is direct. Interacts with TRIM28; the interaction is weak. Interacts with FOXP3. Interacts with RRP1B. Interacts with SERPINE1. Interacts with LZTR1. Component of the SHOC2-MRAS-PP1c (SMP) complex consisting of SHOC2, GTP-bound M-Ras/MRAS and the catalytic subunit of protein phosphatase 1 (either PPP1CA, PPP1CB or PPP1CC). SHOC2 and PP1c preferably bind M-Ras/MRAS, but they also bind K-Ras/KRAS, N-Ras/NRAS and H-Ras/HRAS; these interactions are GTP-dependent and both SHOC2 and PP1c are required to form a stable complex. Interacts with SHOC2 in the absence of Ras GTPases. It depends on Mn(2+) as a cofactor.

The protein resides in the cytoplasm. It localises to the nucleus. It is found in the nucleoplasm. The protein localises to the nucleolus. The enzyme catalyses O-phospho-L-seryl-[protein] + H2O = L-seryl-[protein] + phosphate. It catalyses the reaction O-phospho-L-threonyl-[protein] + H2O = L-threonyl-[protein] + phosphate. The catalysed reaction is O-phospho-L-seryl-[myosin light chain] + H2O = L-seryl-[myosin light chain] + phosphate. It carries out the reaction O-phospho-L-threonyl-[myosin light chain] + H2O = L-threonyl-[myosin light chain] + phosphate. Its activity is regulated as follows. Inhibited by the toxins okadaic acid, tautomycin and microcystin Leu-Arg. The phosphatase activity of the PPP1R15A-PP1 complex toward EIF2S1 is specifically inhibited by Salubrinal, a drug that protects cells from endoplasmic reticulum stress. In terms of biological role, protein phosphatase that associates with over 200 regulatory proteins to form highly specific holoenzymes which dephosphorylate hundreds of biological targets. Protein phosphatase (PP1) is essential for cell division, it participates in the regulation of glycogen metabolism, muscle contractility and protein synthesis. Involved in regulation of ionic conductances and long-term synaptic plasticity. Component of the PTW/PP1 phosphatase complex, which plays a role in the control of chromatin structure and cell cycle progression during the transition from mitosis into interphase. In balance with CSNK1D and CSNK1E, determines the circadian period length, through the regulation of the speed and rhythmicity of PER1 and PER2 phosphorylation. May dephosphorylate CSNK1D and CSNK1E. Core component of the SHOC2-MRAS-PP1c (SMP) holophosphatase complex that regulates the MAPK pathway activation. The SMP complex specifically dephosphorylates the inhibitory phosphorylation at 'Ser-259' of RAF1 kinase, 'Ser-365' of BRAF kinase and 'Ser-214' of ARAF kinase, stimulating their kinase activities. The SMP complex enhances the dephosphorylation activity and substrate specificity of PP1c. The polypeptide is Serine/threonine-protein phosphatase PP1-beta catalytic subunit (PPP1CB) (Bos taurus (Bovine)).